A 502-amino-acid chain; its full sequence is Thermosome subunit beta (502 aa).

Belongs to the TCP-1 chaperonin family. In terms of assembly, forms a Heterooligomeric complex of two stacked eight-membered rings.

In terms of biological role, molecular chaperone; binds unfolded polypeptides in vitro, and has a weak ATPase activity. In Desulfurococcus mucosus (Desulfurococcus mobilis), this protein is Thermosome subunit beta (thsB).